Reading from the N-terminus, the 102-residue chain is Small ribosomal subunit protein uS10 (102 aa).

The protein belongs to the universal ribosomal protein uS10 family. Part of the 30S ribosomal subunit.

Involved in the binding of tRNA to the ribosomes. The protein is Small ribosomal subunit protein uS10 of Geobacter sulfurreducens (strain ATCC 51573 / DSM 12127 / PCA).